The primary structure comprises 141 residues: Nucleoside diphosphate kinase (141 aa).

Residues Lys11, Phe59, Arg87, Thr93, Arg104, and Asn114 each coordinate ATP. His117 serves as the catalytic Pros-phosphohistidine intermediate.

The protein belongs to the NDK family. As to quaternary structure, homotetramer. It depends on Mg(2+) as a cofactor.

It localises to the cytoplasm. The enzyme catalyses a 2'-deoxyribonucleoside 5'-diphosphate + ATP = a 2'-deoxyribonucleoside 5'-triphosphate + ADP. It carries out the reaction a ribonucleoside 5'-diphosphate + ATP = a ribonucleoside 5'-triphosphate + ADP. In terms of biological role, major role in the synthesis of nucleoside triphosphates other than ATP. The ATP gamma phosphate is transferred to the NDP beta phosphate via a ping-pong mechanism, using a phosphorylated active-site intermediate. This Herminiimonas arsenicoxydans protein is Nucleoside diphosphate kinase.